Consider the following 191-residue polypeptide: Ribonuclease HII (191 aa).

The RNase H type-2 domain maps to 7 to 191; that stretch reads ILMAGVDEVG…YSPVADLISK (185 aa). A divalent metal cation-binding residues include Asp13, Glu14, and Asp103.

The protein belongs to the RNase HII family. Mn(2+) serves as cofactor. It depends on Mg(2+) as a cofactor.

The protein resides in the cytoplasm. It catalyses the reaction Endonucleolytic cleavage to 5'-phosphomonoester.. In terms of biological role, endonuclease that specifically degrades the RNA of RNA-DNA hybrids. The chain is Ribonuclease HII from Legionella pneumophila (strain Paris).